A 475-amino-acid chain; its full sequence is MTTILTSTFRNLSTTSKWALRSSIRPLSCSSQLHSAPAVQTKSKKTLAKPNMKNIVVVEGVRIPFLLSGTSYKDLMPHDLARAALSGLLHRTNIPKDVVDYIIFGTVIQEVKTSNVAREAALGAGFSDKTPAHTVTMACISSNQAMTTAVGLIASGQCDVVVAGGVELMSDVPIRHSRNMRKMMLDLNKAKTLGQRLSLLSKFRLNFLSPELPAVAEFSTNETMGHSADRLAAAFAVSRMEQDEYALRSHSLAKKAQDEGHLSDIVPFKVPGKDTVTKDNGIRPSSLEQMAKLKPAFIKPYGTVTAANSSFLTDGASAMLIMSEDRALAMGYKPKAYLRDFIYVSQDPKDQLLLGPTYATPKVLEKAGLTMNDIDAFEFHEAFSGQILANFKAMDSDWFAQNYMGRKTKVGSPPLEKFNIWGGSLSLGHPFGATGCRLVMAAANRLRKDGGQYALVAACAAGGQGHAMIVEAYPK.

A mitochondrion-targeting transit peptide spans 1 to 34; it reads MTTILTSTFRNLSTTSKWALRSSIRPLSCSSQLH. Lys53 carries the N6-succinyllysine modification. Lys73 carries the post-translational modification N6-acetyllysine; alternate. An N6-succinyllysine; alternate modification is found at Lys73. Residue Cys139 is the Acyl-thioester intermediate of the active site. An intramembrane segment occupies 174–221; that stretch reads IRHSRNMRKMMLDLNKAKTLGQRLSLLSKFRLNFLSPELPAVAEFSTN. The residue at position 189 (Lys189) is an N6-acetyllysine; alternate. The residue at position 189 (Lys189) is an N6-succinyllysine; alternate. Residues Lys191, Lys273, and Lys292 each carry the N6-succinyllysine modification. Lys294 bears the N6-acetyllysine; alternate mark. At Lys294 the chain carries N6-succinyllysine; alternate. The residue at position 299 (Lys299) is an N6-acetyllysine. Lys333 is subject to N6-acetyllysine; alternate. Lys333 bears the N6-succinyllysine; alternate mark. N6-acetyllysine is present on residues Lys349 and Lys362. Catalysis depends on Cys459, which acts as the Proton donor/acceptor.

This sequence belongs to the thiolase-like superfamily. Thiolase family. Heterotetramer of 2 alpha/HADHA and 2 beta/HADHB subunits; forms the mitochondrial trifunctional enzyme. Also purified as higher order heterooligomers including a 4 alpha/HADHA and 4 beta/HADHB heterooligomer which physiological significance remains unclear. The mitochondrial trifunctional enzyme interacts with MTLN. Interacts with RSAD2/viperin. Post-translationally, acetylation of Lys-202 is observed in liver mitochondria from fasted mice but not from fed mice.

The protein localises to the mitochondrion. It is found in the mitochondrion inner membrane. It localises to the mitochondrion outer membrane. Its subcellular location is the endoplasmic reticulum. The catalysed reaction is an acyl-CoA + acetyl-CoA = a 3-oxoacyl-CoA + CoA. The enzyme catalyses butanoyl-CoA + acetyl-CoA = 3-oxohexanoyl-CoA + CoA. It catalyses the reaction hexanoyl-CoA + acetyl-CoA = 3-oxooctanoyl-CoA + CoA. It carries out the reaction octanoyl-CoA + acetyl-CoA = 3-oxodecanoyl-CoA + CoA. The catalysed reaction is decanoyl-CoA + acetyl-CoA = 3-oxododecanoyl-CoA + CoA. The enzyme catalyses dodecanoyl-CoA + acetyl-CoA = 3-oxotetradecanoyl-CoA + CoA. It catalyses the reaction tetradecanoyl-CoA + acetyl-CoA = 3-oxohexadecanoyl-CoA + CoA. The protein operates within lipid metabolism; fatty acid beta-oxidation. Its function is as follows. Mitochondrial trifunctional enzyme catalyzes the last three of the four reactions of the mitochondrial beta-oxidation pathway. The mitochondrial beta-oxidation pathway is the major energy-producing process in tissues and is performed through four consecutive reactions breaking down fatty acids into acetyl-CoA. Among the enzymes involved in this pathway, the trifunctional enzyme exhibits specificity for long-chain fatty acids. Mitochondrial trifunctional enzyme is a heterotetrameric complex composed of two proteins, the trifunctional enzyme subunit alpha/HADHA carries the 2,3-enoyl-CoA hydratase and the 3-hydroxyacyl-CoA dehydrogenase activities, while the trifunctional enzyme subunit beta/HADHB described here bears the 3-ketoacyl-CoA thiolase activity. In Mus musculus (Mouse), this protein is Trifunctional enzyme subunit beta, mitochondrial (Hadhb).